We begin with the raw amino-acid sequence, 72 residues long: Large ribosomal subunit protein bL31 (72 aa).

Zn(2+) is bound by residues cysteine 16, cysteine 18, cysteine 37, and cysteine 40.

It belongs to the bacterial ribosomal protein bL31 family. Type A subfamily. As to quaternary structure, part of the 50S ribosomal subunit. The cofactor is Zn(2+).

Functionally, binds the 23S rRNA. The protein is Large ribosomal subunit protein bL31 of Pseudomonas fluorescens (strain Pf0-1).